The chain runs to 635 residues: Protein phosphatase PP2A regulatory subunit A (635 aa).

The span at 1 to 27 (MSGARSTTAGAVPSAATTSTTSTTSNS) shows a compositional bias: low complexity. The disordered stretch occupies residues 1–33 (MSGARSTTAGAVPSAATTSTTSTTSNSKDSDSN). 15 HEAT repeats span residues 34–72 (ESLYPLALLMDELKHDDIANRVEAMKKLDTIALALGPER), 73–111 (TRNELIPFLTEVAQDDEDEVFAVLAEQLGKFVPYIGGPQ), 112–150 (YATILLPVLEILASAEETLVREKAVDSLNNVAQELSQEQ), 151–189 (LFSDFVPLIEHLATADWFSSKVSACGLFKSVIVRIKDDS), 190–228 (LRKNILALYLQLAQDDTPMVKRAVGKNLPILIDLLTQNL), 229–273 (GLST…NAKG), 274–316 (DESH…SNQA), 317–356 (YIDELVQPFLNLCEDNEGDVREAVAKQVSGFAKFLNDPSI), 357–395 (ILNKILPAVQNLSMDESETVRSALASKITNIVLLLNKDQ), 396–434 (VINNFLPILLNMLRDEFPDVRLNIIASLKVVNDVIGIEL), 435–473 (LSDSLLPAITELAKDVNWRVRMAIIEYIPILAEQLGMQF), 474–512 (FDQQLSDLCLSWLWDTVYSIREAAVNNLKRLTEIFGSDW), 513–553 (CRDE…SLDV), 554–598 (VTEQ…YDAL), and 599–632 (IKNTILPSLQTLCQDEDVDVKYFAKKSLAECQEL).

The protein belongs to the phosphatase 2A regulatory subunit A family. In terms of assembly, PP2A exists in several trimeric forms, all of which consist of a core composed of a catalytic subunit associated with a 65 kDa regulatory subunit (PR65) (subunit A). The core complex associates with a third, variable subunit (subunit B), which confers distinct properties to the holoenzyme.

Functionally, phosphatase 2A affects a variety of biological processes in the cell such as transcription, cell cycle progression and cellular morphogenesis, and provides an initial identification of critical substrates for this phosphatase. The regulatory subunit may direct the catalytic subunit to distinct, albeit overlapping, subsets of substrates. The protein is Protein phosphatase PP2A regulatory subunit A (TPD3) of Saccharomyces cerevisiae (strain ATCC 204508 / S288c) (Baker's yeast).